The primary structure comprises 344 residues: DNA fragmentation factor subunit beta (344 aa).

Residues 7–83 form the CIDE-N domain; that stretch reads QPKCVKLRAL…LLTAGETWHG (77 aa).

Heterodimer of DFFA and DFFB. Interacts with H1-1.

The protein localises to the cytoplasm. The protein resides in the nucleus. With respect to regulation, inhibited by DFFA (DFF45). Its function is as follows. Nuclease that induces DNA fragmentation and chromatin condensation during apoptosis. Degrades naked DNA and induces apoptotic morphology. The chain is DNA fragmentation factor subunit beta (Dffb) from Mus musculus (Mouse).